A 468-amino-acid chain; its full sequence is uncharacterized protein (468 aa).

The HTH gntR-type domain maps to 1–69; that stretch reads MKKYQQLAEQ…PQSGYYVAPQ (69 aa). Residue Lys-312 is modified to N6-(pyridoxal phosphate)lysine.

This sequence in the C-terminal section; belongs to the class-I pyridoxal-phosphate-dependent aminotransferase family.

This is an uncharacterized protein from Escherichia coli (strain K12).